The following is a 235-amino-acid chain: MKQKSWNIHLEEMMEAGVHFGHQARKWNPKMAPYIFTERKGIHIINLTQTARFLSEACDLVANASSKGKQFLIVGTKYQAADLIESSALKARCHYVNQKWLGGMLTNWSTIETRLQKFKDLENKKKTGTINRLPKKEAANLKRQLDHLQKYLGGIKYMTSLPDIVIIIDQQKEFTAIQECITLGIPTICLVDTDCDPDMTDIPIPANDDARASIRWILNKLTLAICEGRYNSIKN.

This sequence belongs to the universal ribosomal protein uS2 family.

It localises to the plastid. It is found in the chloroplast. In Marchantia polymorpha (Common liverwort), this protein is Small ribosomal subunit protein uS2c (rps2).